Consider the following 343-residue polypeptide: Methionine import ATP-binding protein MetN (343 aa).

One can recognise an ABC transporter domain in the interval 2–241 (IKLSNITKVF…PKTPLAQKFI (240 aa)). 38 to 45 (GASGAGKS) serves as a coordination point for ATP.

The protein belongs to the ABC transporter superfamily. Methionine importer (TC 3.A.1.24) family. As to quaternary structure, the complex is composed of two ATP-binding proteins (MetN), two transmembrane proteins (MetI) and a solute-binding protein (MetQ).

Its subcellular location is the cell inner membrane. The enzyme catalyses L-methionine(out) + ATP + H2O = L-methionine(in) + ADP + phosphate + H(+). The catalysed reaction is D-methionine(out) + ATP + H2O = D-methionine(in) + ADP + phosphate + H(+). In terms of biological role, part of the ABC transporter complex MetNIQ involved in methionine import. Responsible for energy coupling to the transport system. The protein is Methionine import ATP-binding protein MetN of Shigella boydii serotype 4 (strain Sb227).